The chain runs to 171 residues: Large ribosomal subunit protein uL10 (171 aa).

Belongs to the universal ribosomal protein uL10 family. In terms of assembly, part of the ribosomal stalk of the 50S ribosomal subunit. The N-terminus interacts with L11 and the large rRNA to form the base of the stalk. The C-terminus forms an elongated spine to which L12 dimers bind in a sequential fashion forming a multimeric L10(L12)X complex.

Functionally, forms part of the ribosomal stalk, playing a central role in the interaction of the ribosome with GTP-bound translation factors. This is Large ribosomal subunit protein uL10 from Corynebacterium glutamicum (strain ATCC 13032 / DSM 20300 / JCM 1318 / BCRC 11384 / CCUG 27702 / LMG 3730 / NBRC 12168 / NCIMB 10025 / NRRL B-2784 / 534).